A 1582-amino-acid polypeptide reads, in one-letter code: Alpha-2-macroglobulin (1582 aa).

Positions 1-15 (MICLAALAVAVPARA) are cleaved as a signal peptide. Positions 1080 to 1083 (CAEQ) form a cross-link, isoglutamyl cysteine thioester (Cys-Gln).

Belongs to the protease inhibitor I39 (alpha-2-macroglobulin) family. Bacterial alpha-2-macroglobulin subfamily.

Protects the bacterial cell from host peptidases. The chain is Alpha-2-macroglobulin from Ralstonia nicotianae (strain ATCC BAA-1114 / GMI1000) (Ralstonia solanacearum).